The following is a 494-amino-acid chain: 5'-3' exonuclease PLD3 (494 aa).

Residues 1–37 lie on the Cytoplasmic side of the membrane; sequence MNPKVEYKQIQSHDEAENQVLQHECHQAKARKYYRCA. The chain crosses the membrane as a helical; Signal-anchor for type II membrane protein span at residues 38–58; it reads VVIAIIITLLFCVLASQLLLF. The Lumenal segment spans residues 59 to 494; sequence PLFSITSQTT…LSSWKEKCIF (436 aa). N-linked (GlcNAc...) asparagine glycosylation occurs at asparagine 100. A PLD phosphodiesterase 1 domain is found at 198–225; the sequence is TDGVLHTKFWVVDSEHFYIGSANMDWRS. Catalysis depends on residues histidine 203, lysine 205, and aspartate 210. N-linked (GlcNAc...) asparagine glycosylation is found at asparagine 238, asparagine 260, asparagine 270, asparagine 286, and asparagine 389. A PLD phosphodiesterase 2 domain is found at 413–439; the sequence is YARVNHNKYMVTDRVAYIGTSNWSGDY. Residues histidine 418, lysine 420, and aspartate 425 contribute to the active site. N-linked (GlcNAc...) asparagine glycosylation is found at asparagine 434, asparagine 451, and asparagine 477.

The protein belongs to the phospholipase D family. Post-translationally, N-glycosylated. Proteolytically processed to a soluble form that is stable within endosomes and lysosomes. During transport through the secretory pathway becomes proteolysed by cysteine proteases, thereby releasing a stable soluble lysosomal lumenal polypeptide, whereas the transmembrane-bound fragment is rapidly degraded. Its transport route to lysosomes involves ubiquitination and the ESCRT complex. In terms of processing, ubiquitinated. Ubiquitination mediates sorting into lysosomes.

The protein localises to the endoplasmic reticulum membrane. It localises to the lysosome lumen. Its subcellular location is the early endosome membrane. The protein resides in the late endosome membrane. It is found in the golgi apparatus membrane. The protein localises to the endosome membrane. It carries out the reaction Exonucleolytic cleavage in the 5'- to 3'-direction to yield nucleoside 3'-phosphates.. 5'-&gt;3' DNA exonuclease which digests single-stranded DNA (ssDNA). Regulates inflammatory cytokine responses via the degradation of nucleic acids, by reducing the concentration of ssDNA able to stimulate TLR9, a nucleotide-sensing receptor in collaboration with PLD4. May be important in myotube formation. Plays a role in lysosomal homeostasis. Involved in the regulation of endosomal protein sorting. This chain is 5'-3' exonuclease PLD3 (pld3), found in Xenopus tropicalis (Western clawed frog).